The primary structure comprises 859 residues: Linoleate 9S-lipoxygenase B (859 aa).

The region spanning 34–158 (INIGASVVDG…RYKSDRIFFA (125 aa)) is the PLAT domain. The region spanning 161-859 (AYLPSETPQP…GKGIPNSVSI (699 aa)) is the Lipoxygenase domain. Positions 213–246 (EYARPILGGSSEYPYPRRGRTGREPTKADPNCES) are disordered. Over residues 233 to 244 (TGREPTKADPNC) the composition is skewed to basic and acidic residues. Histidine 521, histidine 526, histidine 711, and isoleucine 859 together coordinate Fe cation.

The protein belongs to the lipoxygenase family. In terms of assembly, monomer. Fe cation is required as a cofactor. Fruit specific.

It localises to the cytoplasm. It carries out the reaction (9Z,12Z)-octadecadienoate + O2 = (9S)-hydroperoxy-(10E,12Z)-octadecadienoate. It participates in lipid metabolism; oxylipin biosynthesis. Plant lipoxygenase may be involved in a number of diverse aspects of plant physiology including growth and development, pest resistance, and senescence or responses to wounding. It catalyzes the hydroperoxidation of lipids containing a cis,cis-1,4-pentadiene structure. The chain is Linoleate 9S-lipoxygenase B (LOX1.2) from Solanum lycopersicum (Tomato).